The chain runs to 211 residues: Histone H1-beta, late embryonic (211 aa).

2 disordered regions span residues 1 to 22 (MAAE…PSSS) and 81 to 211 (KGAS…AAKK). The H15 domain maps to 17–91 (AHPSSSEMVL…GASGSFKLGK (75 aa)). Basic and acidic residues-rich tracts occupy residues 95 to 107 (GKSD…DAAK) and 114 to 123 (KKKEAKEKKA). Composition is skewed to basic residues over residues 124–177 (ARSK…KKAA) and 185–211 (KAAK…AAKK).

It belongs to the histone H1/H5 family.

Its subcellular location is the nucleus. The protein localises to the chromosome. In terms of biological role, histones H1 are necessary for the condensation of nucleosome chains into higher-order structures. This Strongylocentrotus purpuratus (Purple sea urchin) protein is Histone H1-beta, late embryonic.